The following is a 68-amino-acid chain: MSAEERLIELEIRVAEQEKTIDELSSVLTEQWKTVDQLSKKLNALTNRFLELEEQAAPDVPVTKPPHW.

It belongs to the SlyX family.

The polypeptide is Protein SlyX homolog (Brucella abortus (strain S19)).